A 519-amino-acid polypeptide reads, in one-letter code: cAMP-dependent protein kinase catalytic subunit (519 aa).

Residues 1–195 (MLPDTGILSP…SQTLQKAENA (195 aa)) are disordered. Composition is skewed to polar residues over residues 10–25 (PFTT…SQTL), 116–159 (VTPS…TSPI), and 173–191 (TPVN…TLQK). One can recognise a Protein kinase domain in the interval 208–463 (FNFQRTLGTG…SRSVLEHPWF (256 aa)). Residues 214–222 (LGTGSFGRV) and lysine 237 each bind ATP. Aspartate 331 serves as the catalytic Proton acceptor. One can recognise an AGC-kinase C-terminal domain in the interval 464 to 519 (AEVNWERLLSKQIEPPYVPPVRGGIGDASLFDKYPEETEEYGKDGPDQYGHFFTDF).

It belongs to the protein kinase superfamily. Ser/Thr protein kinase family.

The enzyme catalyses L-seryl-[protein] + ATP = O-phospho-L-seryl-[protein] + ADP + H(+). It catalyses the reaction L-threonyl-[protein] + ATP = O-phospho-L-threonyl-[protein] + ADP + H(+). With respect to regulation, activated by cAMP. Functions downstream of adenylate cyclase to regulate trap-development for nematode capture. The polypeptide is cAMP-dependent protein kinase catalytic subunit (Arthrobotrys oligospora (strain ATCC 24927 / CBS 115.81 / DSM 1491) (Nematode-trapping fungus)).